Here is a 254-residue protein sequence, read N- to C-terminus: tRNA threonylcarbamoyladenosine dehydratase (254 aa).

Belongs to the HesA/MoeB/ThiF family.

Its function is as follows. Catalyzes the ATP-dependent dehydration of threonylcarbamoyladenosine at position 37 (t(6)A37) to form cyclic t(6)A37 (ct(6)A37) in tRNAs that read codons beginning with adenine. This is tRNA threonylcarbamoyladenosine dehydratase (tcdA) from Bacillus subtilis (strain 168).